A 184-amino-acid polypeptide reads, in one-letter code: Peptide deformylase 2 (184 aa).

The Fe cation site is built by Cys-110 and His-153. Glu-154 is an active-site residue. Residue His-157 coordinates Fe cation.

The protein belongs to the polypeptide deformylase family. The cofactor is Fe(2+).

It catalyses the reaction N-terminal N-formyl-L-methionyl-[peptide] + H2O = N-terminal L-methionyl-[peptide] + formate. Removes the formyl group from the N-terminal Met of newly synthesized proteins. Requires at least a dipeptide for an efficient rate of reaction. N-terminal L-methionine is a prerequisite for activity but the enzyme has broad specificity at other positions. The sequence is that of Peptide deformylase 2 from Bacillus anthracis.